A 198-amino-acid chain; its full sequence is Recombination protein RecR (198 aa).

Residues 58–73 form a C4-type zinc finger; sequence CSVCGNFTDKDPCAIC. A Toprim domain is found at 81 to 175; the sequence is SIICVIEQPK…KVTRIAHGVP (95 aa).

This sequence belongs to the RecR family.

Functionally, may play a role in DNA repair. It seems to be involved in an RecBC-independent recombinational process of DNA repair. It may act with RecF and RecO. The protein is Recombination protein RecR of Clostridium botulinum (strain ATCC 19397 / Type A).